A 129-amino-acid chain; its full sequence is Glycine cleavage system H protein (129 aa).

In terms of domain architecture, Lipoyl-binding spans 22-103 (TGTVGITDYA…AHTAWIMKIE (82 aa)). N6-lipoyllysine is present on K63.

The protein belongs to the GcvH family. The glycine cleavage system is composed of four proteins: P, T, L and H. The cofactor is (R)-lipoate.

In terms of biological role, the glycine cleavage system catalyzes the degradation of glycine. The H protein shuttles the methylamine group of glycine from the P protein to the T protein. The sequence is that of Glycine cleavage system H protein from Acidobacterium capsulatum (strain ATCC 51196 / DSM 11244 / BCRC 80197 / JCM 7670 / NBRC 15755 / NCIMB 13165 / 161).